The chain runs to 383 residues: Lipid-A-disaccharide synthase (383 aa).

Belongs to the LpxB family.

The catalysed reaction is 2-N,3-O-bis[(3R)-3-hydroxytetradecanoyl]-alpha-D-glucosaminyl 1-phosphate + UDP-2-N,3-O-bis[(3R)-3-hydroxytetradecanoyl]-alpha-D-glucosamine = lipid A disaccharide (E. coli) + UDP + H(+). It carries out the reaction a lipid X + a UDP-2-N,3-O-bis[(3R)-3-hydroxyacyl]-alpha-D-glucosamine = a lipid A disaccharide + UDP + H(+). The protein operates within glycolipid biosynthesis; lipid IV(A) biosynthesis; lipid IV(A) from (3R)-3-hydroxytetradecanoyl-[acyl-carrier-protein] and UDP-N-acetyl-alpha-D-glucosamine: step 5/6. In terms of biological role, condensation of UDP-2,3-diacylglucosamine and 2,3-diacylglucosamine-1-phosphate to form lipid A disaccharide, a precursor of lipid A, a phosphorylated glycolipid that anchors the lipopolysaccharide to the outer membrane of the cell. In Pectobacterium carotovorum subsp. carotovorum (strain PC1), this protein is Lipid-A-disaccharide synthase.